A 473-amino-acid polypeptide reads, in one-letter code: Cysteine--tRNA ligase (473 aa).

Position 30 (cysteine 30) interacts with Zn(2+). A 'HIGH' region motif is present at residues methionine 32 to histidine 42. Zn(2+)-binding residues include cysteine 213, histidine 238, and glutamate 242. The short motif at lysine 270–serine 274 is the 'KMSKS' region element. Lysine 273 lines the ATP pocket.

This sequence belongs to the class-I aminoacyl-tRNA synthetase family. As to quaternary structure, monomer. Zn(2+) is required as a cofactor.

The protein resides in the cytoplasm. The enzyme catalyses tRNA(Cys) + L-cysteine + ATP = L-cysteinyl-tRNA(Cys) + AMP + diphosphate. In Acinetobacter baylyi (strain ATCC 33305 / BD413 / ADP1), this protein is Cysteine--tRNA ligase.